The chain runs to 273 residues: Cell division cycle-associated protein 3 (273 aa).

Disordered stretches follow at residues 1-231 and 251-273; these read MGST…ALSE and GGGA…LMES. Residues S29 and S31 each carry the phosphoserine modification. Residues 32 to 45 show a composition bias toward polar residues; it reads AGIQRTPIQVESSP. T37 carries the post-translational modification Phosphothreonine. 2 positions are modified to phosphoserine: S44 and S67. T75 is subject to Phosphothreonine. Positions 90–124 are F-box-like; it reads KELSEVFETEVSETEVSESISSPVLGLPQETPLSS. A Phosphoserine modification is found at S93. Positions 94–105 are enriched in acidic residues; that stretch reads EVFETEVSETEV. Polar residues-rich tracts occupy residues 144 to 154 and 164 to 175; these read PWSQTELNSKQ and STETMVSGQTSD. Position 204 is a phosphoserine (S204). T207 bears the Phosphothreonine mark. Residues 210–220 show a composition bias toward polar residues; sequence QDDNSPGTLTL. The residue at position 214 (S214) is a Phosphoserine. T217 carries the phosphothreonine modification. The KEN box motif lies at 263 to 265; the sequence is KEN.

In terms of assembly, interacts with SKP1. Part of a SCF (SKP1-cullin-F-box) protein ligase complex. In terms of processing, ubiquitinated and degraded by the APC/C-Cdh1 complex.

It is found in the cytoplasm. The protein localises to the cytosol. The protein operates within protein modification; protein ubiquitination. F-box-like protein which is required for entry into mitosis. Acts by participating in E3 ligase complexes that mediate the ubiquitination and degradation of WEE1 kinase at G2/M phase. This is Cell division cycle-associated protein 3 (Cdca3) from Rattus norvegicus (Rat).